Here is a 160-residue protein sequence, read N- to C-terminus: Phosphopantetheine adenylyltransferase (160 aa).

A substrate-binding site is contributed by S10. ATP-binding positions include 10-11 (SF) and H18. Substrate contacts are provided by K42, T74, and R88. ATP is bound by residues 89-91 (GLR), E99, and 124-130 (YSFVSST).

Belongs to the bacterial CoaD family. Homohexamer. Mg(2+) serves as cofactor.

It is found in the cytoplasm. It catalyses the reaction (R)-4'-phosphopantetheine + ATP + H(+) = 3'-dephospho-CoA + diphosphate. It functions in the pathway cofactor biosynthesis; coenzyme A biosynthesis; CoA from (R)-pantothenate: step 4/5. In terms of biological role, reversibly transfers an adenylyl group from ATP to 4'-phosphopantetheine, yielding dephospho-CoA (dPCoA) and pyrophosphate. The polypeptide is Phosphopantetheine adenylyltransferase (Leptospira biflexa serovar Patoc (strain Patoc 1 / Ames)).